A 142-amino-acid polypeptide reads, in one-letter code: HTH-type transcriptional regulator MntR (142 aa).

In terms of domain architecture, HTH dtxR-type spans 1–63 (MPTPSMEDYI…YEKYRGLILT (63 aa)). Asp8, Glu11, His77, Glu99, Glu102, and His103 together coordinate Mn(2+).

This sequence belongs to the DtxR/MntR family. Homodimer.

It is found in the cytoplasm. Its activity is regulated as follows. DNA binding is strongly activated by Mn(2+). Functionally, central regulator of manganese homeostasis. This is HTH-type transcriptional regulator MntR from Listeria welshimeri serovar 6b (strain ATCC 35897 / DSM 20650 / CCUG 15529 / CIP 8149 / NCTC 11857 / SLCC 5334 / V8).